We begin with the raw amino-acid sequence, 155 residues long: Protein SprT-like (155 aa).

A SprT-like domain is found at 7 to 145 (QRHMEEVSLQ…GSCGGKLIQT (139 aa)). Position 67 (His67) interacts with Zn(2+). Glu68 is an active-site residue. His71 lines the Zn(2+) pocket.

It belongs to the SprT family. The cofactor is Zn(2+).

Its subcellular location is the cytoplasm. The sequence is that of Protein SprT-like from Listeria monocytogenes serovar 1/2a (strain ATCC BAA-679 / EGD-e).